Here is a 237-residue protein sequence, read N- to C-terminus: Large ribosomal subunit protein uL3 (237 aa).

Disordered stretches follow at residues 133 to 155 (ASHG…DPGK) and 213 to 237 (PENA…EGAE). Polar residues predominate over residues 135 to 150 (HGNSITHRSHGSTGQR). An N5-methylglutamine modification is found at Q151. A compositionally biased stretch (low complexity) spans 220-237 (AGLRAGAKAEAAATEGAE).

This sequence belongs to the universal ribosomal protein uL3 family. Part of the 50S ribosomal subunit. Forms a cluster with proteins L14 and L19. Methylated by PrmB.

In terms of biological role, one of the primary rRNA binding proteins, it binds directly near the 3'-end of the 23S rRNA, where it nucleates assembly of the 50S subunit. The sequence is that of Large ribosomal subunit protein uL3 from Brucella suis biovar 1 (strain 1330).